The primary structure comprises 150 residues: MCSRFSSTSLKCLLCSQNRHCSSGISTLLRSFSCITLSAISSSVNCSGSSFLGSSFSLFSSFSCKESLLRSGVFPSWLFCMFSSILALAISNSFFFFSSNACFSLLFNSFLVTGFSFSADLLVLAAAADTLESNVSNDIGGNCATRLFKL.

Residues 1–76 (MCSRFSSTSL…SLLRSGVFPS (76 aa)) are Extracellular-facing. Residues 77-97 (WLFCMFSSILALAISNSFFFF) form a helical membrane-spanning segment. The Cytoplasmic portion of the chain corresponds to 98–104 (SSNACFS). A helical membrane pass occupies residues 105–125 (LLFNSFLVTGFSFSADLLVLA). At 126-150 (AAADTLESNVSNDIGGNCATRLFKL) the chain is on the extracellular side.

It localises to the membrane. The chain is Protein SLM6 from Saccharomyces cerevisiae (strain ATCC 204508 / S288c) (Baker's yeast).